The following is a 201-amino-acid chain: Single-stranded DNA-binding protein, mitochondrial (201 aa).

The 114-residue stretch at Val-71 to Tyr-184 folds into the SSB domain.

The protein localises to the mitochondrion. Binds to ss-DNA. In Arabidopsis thaliana (Mouse-ear cress), this protein is Single-stranded DNA-binding protein, mitochondrial.